The chain runs to 1388 residues: Rho-associated protein kinase 2 (1388 aa).

The tract at residues 1-24 (MSRPPPTGKMPGAPEAVSGDGAGA) is disordered. A Protein kinase domain is found at 92–354 (YDVVKVIGRG…VEEIKQHPFF (263 aa)). Residues 98 to 106 (IGRGAFGEV) and K121 each bind ATP. D214 serves as the catalytic Proton acceptor. The 69-residue stretch at 357–425 (DQWNWDNIRE…YRENLLLSDS (69 aa)) folds into the AGC-kinase C-terminal domain. Residues 363–784 (NIRETAAPVV…INELLKQKDV (422 aa)) form an interaction with PPP1R12A region. The interaction with NPM1 stretch occupies residues 373–420 (PELSSDIDSSNFDDIEDDKGDVETFPIPKAFVGNQLPFIGFTYYRENL). T414 carries the phosphothreonine; by ROCK2 modification. Coiled coils occupy residues 439-1025 (NEES…KQLL) and 1053-1131 (DTDV…IGLD). Positions 497 to 573 (TLRQLEREKA…LDETNALLRT (77 aa)) constitute an REM-1 domain. Basic and acidic residues predominate over residues 512-530 (NAEYQRKADHEADKKRNLE). A disordered region spans residues 512–532 (NAEYQRKADHEADKKRNLEND). Y722 is modified (phosphotyrosine; by SRC). Positions 979–1047 (TSDVANLANE…LAEIMNRKEP (69 aa)) constitute a RhoBD domain. Residues 979 to 1047 (TSDVANLANE…LAEIMNRKEP (69 aa)) are RHOA binding. S1137 is subject to Phosphoserine. One can recognise a PH domain in the interval 1150–1349 (ESRLEGWLSL…WVSRLVKKIP (200 aa)). A Phosphothreonine modification is found at T1212. The Phorbol-ester/DAG-type zinc finger occupies 1260 to 1315 (GHEFIPTLYHFPTNCEACMKPLWHMFKPPPALECRRCHIKCHKDHMDKKEEIIAPC). The segment at 1345–1388 (VKKIPKKPPAPDPFARSSPRTSMKIQQNQSIRRPSRQLAPNKPS) is disordered. S1362 and S1374 each carry phosphoserine. Over residues 1362 to 1376 (SPRTSMKIQQNQSIR) the composition is skewed to polar residues.

It belongs to the protein kinase superfamily. AGC Ser/Thr protein kinase family. Homodimer. Interacts with IRS1. Interacts with RAF1. Interacts with RHOA (activated by GTP). Interacts with RHOB and RHOC. Interacts with PPP1R12A. Interacts with EP300. Interacts with CHORDC1. Interacts with BRCA2. Interacts with NPM1; this interaction enhances ROCK2 activity. Interacts with SORL1. Interacts with PJVK. Mg(2+) is required as a cofactor. Autophosphorylated. Phosphorylation at Tyr-722 reduces its binding to RHOA and is crucial for focal adhesion dynamics. Dephosphorylation by PTPN11 stimulates its RHOA binding activity. In terms of processing, cleaved by granzyme B during apoptosis. This leads to constitutive activation of the kinase and membrane blebbing. In terms of tissue distribution, highly expressed in whole brain and in cerebellum, and at lower levels in heart and lung. Detected at low levels in skeletal muscle, spleen, liver, kidney and pancreas.

It localises to the cytoplasm. Its subcellular location is the cell membrane. The protein localises to the nucleus. The protein resides in the cytoskeleton. It is found in the microtubule organizing center. It localises to the centrosome. It catalyses the reaction L-seryl-[protein] + ATP = O-phospho-L-seryl-[protein] + ADP + H(+). It carries out the reaction L-threonyl-[protein] + ATP = O-phospho-L-threonyl-[protein] + ADP + H(+). Activated by RHOA binding. Inhibited by Y-27632. Functionally, protein kinase which is a key regulator of actin cytoskeleton and cell polarity. Involved in regulation of smooth muscle contraction, actin cytoskeleton organization, stress fiber and focal adhesion formation, neurite retraction, cell adhesion and motility via phosphorylation of ADD1, BRCA2, CNN1, EZR, DPYSL2, EP300, MSN, MYL9/MLC2, NPM1, RDX, PPP1R12A and VIM. Phosphorylates SORL1 and IRF4. Acts as a negative regulator of VEGF-induced angiogenic endothelial cell activation. Positively regulates the activation of p42/MAPK1-p44/MAPK3 and of p90RSK/RPS6KA1 during myogenic differentiation. Plays an important role in the timely initiation of centrosome duplication. Inhibits keratinocyte terminal differentiation. May regulate closure of the eyelids and ventral body wall through organization of actomyosin bundles. Plays a critical role in the regulation of spine and synaptic properties in the hippocampus. Plays an important role in generating the circadian rhythm of the aortic myofilament Ca(2+) sensitivity and vascular contractility by modulating the myosin light chain phosphorylation. The chain is Rho-associated protein kinase 2 (ROCK2) from Bos taurus (Bovine).